Consider the following 215-residue polypeptide: Ribose-5-phosphate isomerase A (215 aa).

Substrate is bound by residues 26-29 (TGST), 79-82 (DGAD), and 92-95 (KGGG). The active-site Proton acceptor is Glu101. Lys119 is a substrate binding site.

It belongs to the ribose 5-phosphate isomerase family. In terms of assembly, homodimer.

It carries out the reaction aldehydo-D-ribose 5-phosphate = D-ribulose 5-phosphate. The protein operates within carbohydrate degradation; pentose phosphate pathway; D-ribose 5-phosphate from D-ribulose 5-phosphate (non-oxidative stage): step 1/1. In terms of biological role, catalyzes the reversible conversion of ribose-5-phosphate to ribulose 5-phosphate. The chain is Ribose-5-phosphate isomerase A from Xylella fastidiosa (strain 9a5c).